The primary structure comprises 440 residues: Lipopolysaccharide-processing protein LpsZ (440 aa).

This sequence to E.coli capsule polysaccharide export protein KpsC.

The protein resides in the cytoplasm. Its function is as follows. Involved in the invasion of nitrogen fixation nodules. May be involved in the biosynthesis of lipopolysaccharides as an enzyme or a regulatory protein. The chain is Lipopolysaccharide-processing protein LpsZ (lpsZ) from Rhizobium meliloti (Ensifer meliloti).